Here is an 806-residue protein sequence, read N- to C-terminus: Exonuclease 1 (806 aa).

Residues 1–99 (MGIQGLLQFI…KSRRERRQAN (99 aa)) are N-domain. Positions 30, 78, 150, 152, 171, 173, and 225 each coordinate Mg(2+). Residues 138-229 (RTRGVDCVVA…ILSGCDYLQS (92 aa)) form an I-domain region. Disordered stretches follow at residues 337-426 (RIDD…EDTS), 443-475 (HCPE…PFRP), and 512-754 (ETQE…SPGL). Over residues 355-378 (RSSSWNDRCDKTATTQASIWSQNY) the composition is skewed to polar residues. Basic and acidic residues predominate over residues 412 to 425 (PQRESQVKRPREDT). 3 stretches are compositionally biased toward polar residues: residues 447–458 (TQPTTKPLTNDN), 533–542 (SQSGGDTSSL), and 578–589 (WSGTTKELNKSV). Residues 592 to 601 (PARDSTERQR) show a composition bias toward basic and acidic residues. Positions 602 to 615 (SSSTPSGLSTLQQF) are enriched in polar residues. A compositionally biased stretch (low complexity) spans 651–670 (SQDSAYFSQSSSISASVENS). The segment covering 676–685 (NSDKEKERDS) has biased composition (basic and acidic residues). Residues 686-696 (VVSNSPSSSPL) show a composition bias toward low complexity. A compositionally biased stretch (polar residues) spans 744-754 (KNVNNENSPGL).

The protein belongs to the XPG/RAD2 endonuclease family. EXO1 subfamily. Mg(2+) is required as a cofactor.

The protein localises to the nucleus. Its function is as follows. 5'-&gt;3' double-stranded DNA exonuclease which may also contain a cryptic 3'-&gt;5' double-stranded DNA exonuclease activity. Also exhibits endonuclease activity against 5'-overhanging flap structures similar to those generated by displacement synthesis when DNA polymerase encounters the 5'-end of a downstream Okazaki fragment. Required for DNA mismatch repair (MMR). The sequence is that of Exonuclease 1 (exo1) from Danio rerio (Zebrafish).